Consider the following 236-residue polypeptide: Heme oxygenase (236 aa).

Heme b is bound at residue His-17.

This sequence belongs to the heme oxygenase family.

The protein localises to the plastid. It localises to the chloroplast. The enzyme catalyses heme b + 3 reduced [NADPH--hemoprotein reductase] + 3 O2 = biliverdin IXalpha + CO + Fe(2+) + 3 oxidized [NADPH--hemoprotein reductase] + 3 H2O + H(+). Its function is as follows. Catalyzes the opening of the heme ring with the release of iron. Key enzyme in the synthesis of the chromophoric part of the photosynthetic antennae. This Porphyra purpurea (Red seaweed) protein is Heme oxygenase (pbsA).